An 842-amino-acid polypeptide reads, in one-letter code: MEMAVANHRERSSDSMNRHLDSSGKYVRYTAEQVEALERVYAECPKPSSLRRQQLIRECSILANIEPKQIKVWFQNRRCRDKQRKEASRLQSVNRKLSAMNKLLMEENDRLQKQVSQLVCENGYMKQQLTTVVNDPSCESVVTTPQHSLRDANSPAGLLSIAEETLAEFLSKATGTAVDWVQMPGMKPGPDSVGIFAISQRCNGVAARACGLVSLEPMKIAEILKDRPSWFRDCRSLEVFTMFPAGNGGTIELVYMQTYAPTTLAPARDFWTLRYTTSLDNGSFVVCERSLSGSGAGPNAASASQFVRAEMLSSGYLIRPCDGGGSIIHIVDHLNLEAWSVPDVLRPLYESSKVVAQKMTISALRYIRQLAQESNGEVVYGLGRQPAVLRTFSQRLSRGFNDAVNGFGDDGWSTMHCDGAEDIIVAINSTKHLNNISNSLSFLGGVLCAKASMLLQNVPPAVLIRFLREHRSEWADFNVDAYSAATLKAGSFAYPGMRPTRFTGSQIIMPLGHTIEHEEMLEVVRLEGHSLAQEDAFMSRDVHLLQICTGIDENAVGACSELIFAPINEMFPDDAPLVPSGFRVIPVDAKTGDVQDLLTANHRTLDLTSSLEVGPSPENASGNSFSSSSSRCILTIAFQFPFENNLQENVAGMACQYVRSVISSVQRVAMAISPSGISPSLGSKLSPGSPEAVTLAQWISQSYSHHLGSELLTIDSLGSDDSVLKLLWDHQDAILCCSLKPQPVFMFANQAGLDMLETTLVALQDITLEKIFDESGRKAICSDFAKLMQQGFACLPSGICVSTMGRHVSYEQAVAWKVFAASEENNNNLHCLAFSFVNWSFV.

The tract at residues 1–20 (MEMAVANHRERSSDSMNRHL) is disordered. The segment covering 7–20 (NHRERSSDSMNRHL) has biased composition (basic and acidic residues). The segment at residues 22 to 85 (SSGKYVRYTA…NRRCRDKQRK (64 aa)) is a DNA-binding region (homeobox). The stretch at 90 to 121 (LQSVNRKLSAMNKLLMEENDRLQKQVSQLVCE) forms a coiled coil. One can recognise an START domain in the interval 151 to 379 (DANSPAGLLS…LAQESNGEVV (229 aa)).

Belongs to the HD-ZIP homeobox family. Class III subfamily. As to quaternary structure, homodimer. Heterodimer with ZPR1, ZPR2, ZPR3 or ZPR4. Interacts with ESR1 and ESR2. Interacts with ZPR1, ZPR2, ZPR3 and ZPR4. Heterodimerization with ZPR3 prevents DNA binding by REV. Expressed in the interfascicular regions of stem and vascular bundles of young roots and leaves.

The protein resides in the nucleus. Its function is as follows. Probable transcription factor involved in the regulation of interfascicular fiber (cortical cells) and secondary xylem differentiation in the inflorescence stems. Required for lateral shoot meristems (LSMs) and flower meristems (FMs) initiation. May be involved in the determination of vascular patterning and organ polarity. Directly regulates the expression of AGO10, ZPR1, ZPR2, ZPR3 and ZPR4. Required to regulate adaxial-abaxial polarity and leaf axial patterning. This Arabidopsis thaliana (Mouse-ear cress) protein is Homeobox-leucine zipper protein REVOLUTA.